Here is a 348-residue protein sequence, read N- to C-terminus: Dihydroorotase (348 aa).

Positions 17 and 19 each coordinate Zn(2+). Residues 19-21 (HLR) and Asn-45 each bind substrate. The Zn(2+) site is built by Lys-103, His-140, and His-178. Residue Lys-103 is modified to N6-carboxylysine. His-140 contributes to the substrate binding site. Residue Leu-223 coordinates substrate. Asp-251 contacts Zn(2+). Residue Asp-251 is part of the active site. Residues His-255 and Ala-267 each coordinate substrate.

It belongs to the metallo-dependent hydrolases superfamily. DHOase family. Class II DHOase subfamily. As to quaternary structure, homodimer. Requires Zn(2+) as cofactor.

The enzyme catalyses (S)-dihydroorotate + H2O = N-carbamoyl-L-aspartate + H(+). It participates in pyrimidine metabolism; UMP biosynthesis via de novo pathway; (S)-dihydroorotate from bicarbonate: step 3/3. Its function is as follows. Catalyzes the reversible cyclization of carbamoyl aspartate to dihydroorotate. The sequence is that of Dihydroorotase from Shigella flexneri.